The sequence spans 327 residues: Sugar transporter ERD6-like 9 (327 aa).

A run of 8 helical transmembrane segments spans residues 26–46, 68–88, 102–122, 125–145, 152–172, 180–200, 260–280, and 295–315; these read FLVF…VALG, VFGS…ATIA, VFCI…WLDL, FFVG…IAEI, GTFT…AYYL, IIAL…FFVP, LTIG…GLGY, and IGMT…LILV.

This sequence belongs to the major facilitator superfamily. Sugar transporter (TC 2.A.1.1) family.

It localises to the membrane. Its function is as follows. Sugar transporter. The polypeptide is Sugar transporter ERD6-like 9 (Arabidopsis thaliana (Mouse-ear cress)).